A 129-amino-acid polypeptide reads, in one-letter code: Large ribosomal subunit protein bL12 (129 aa).

The protein belongs to the bacterial ribosomal protein bL12 family. As to quaternary structure, homodimer. Part of the ribosomal stalk of the 50S ribosomal subunit. Forms a multimeric L10(L12)X complex, where L10 forms an elongated spine to which 2 to 4 L12 dimers bind in a sequential fashion. Binds GTP-bound translation factors.

Forms part of the ribosomal stalk which helps the ribosome interact with GTP-bound translation factors. Is thus essential for accurate translation. The protein is Large ribosomal subunit protein bL12 of Micrococcus luteus (strain ATCC 4698 / DSM 20030 / JCM 1464 / CCM 169 / CCUG 5858 / IAM 1056 / NBRC 3333 / NCIMB 9278 / NCTC 2665 / VKM Ac-2230) (Micrococcus lysodeikticus).